The primary structure comprises 291 residues: Glycine--tRNA ligase alpha subunit (291 aa).

This sequence belongs to the class-II aminoacyl-tRNA synthetase family. As to quaternary structure, tetramer of two alpha and two beta subunits.

The protein resides in the cytoplasm. The catalysed reaction is tRNA(Gly) + glycine + ATP = glycyl-tRNA(Gly) + AMP + diphosphate. This Coprothermobacter proteolyticus (strain ATCC 35245 / DSM 5265 / OCM 4 / BT) protein is Glycine--tRNA ligase alpha subunit.